We begin with the raw amino-acid sequence, 607 residues long: Elongation factor 4 (607 aa).

Residues 11–193 (EKIRNFSIIA…QIVEKVPAPQ (183 aa)) enclose the tr-type G domain. GTP is bound by residues 23-28 (DHGKST) and 140-143 (NKID).

Belongs to the TRAFAC class translation factor GTPase superfamily. Classic translation factor GTPase family. LepA subfamily.

The protein resides in the cell membrane. It catalyses the reaction GTP + H2O = GDP + phosphate + H(+). Its function is as follows. Required for accurate and efficient protein synthesis under certain stress conditions. May act as a fidelity factor of the translation reaction, by catalyzing a one-codon backward translocation of tRNAs on improperly translocated ribosomes. Back-translocation proceeds from a post-translocation (POST) complex to a pre-translocation (PRE) complex, thus giving elongation factor G a second chance to translocate the tRNAs correctly. Binds to ribosomes in a GTP-dependent manner. The chain is Elongation factor 4 from Lactococcus lactis subsp. cremoris (strain SK11).